We begin with the raw amino-acid sequence, 397 residues long: LIM/homeobox protein Lhx9 (397 aa).

The tract at residues 40–60 (RSKTESRLAKGGQMNGRETNM) is disordered. LIM zinc-binding domains follow at residues 69 to 130 (ALCA…RFSV) and 131 to 193 (QRCA…LLQG). The homeobox DNA-binding region spans 267–326 (TKRMATSFKHHQLRTMKSYFAINHNPDAKDLKQLAQKTGLTKRVLQVWFQNARAKFRRNL). Disordered regions lie at residues 330-363 (ENGGVDKADGTSLPAPPSADSGALTPPGTATTLT) and 378-397 (SNLDSHEPGSPSQTTLTNLF). Residues 353-363 (LTPPGTATTLT) show a composition bias toward low complexity. Residues 387–397 (SPSQTTLTNLF) are compositionally biased toward polar residues.

The protein localises to the nucleus. Its function is as follows. May be involved in gonadal development. This is LIM/homeobox protein Lhx9 (LHX9) from Gallus gallus (Chicken).